The sequence spans 411 residues: Phosphoglycerate kinase (411 aa).

Residues 28-30, R45, 68-71, R125, and R165 each bind substrate; these read DIN and HQSR. ATP-binding positions include E338 and 364–367; that span reads GGHL.

It belongs to the phosphoglycerate kinase family. As to quaternary structure, homodimer.

The protein localises to the cytoplasm. It catalyses the reaction (2R)-3-phosphoglycerate + ATP = (2R)-3-phospho-glyceroyl phosphate + ADP. The protein operates within carbohydrate degradation; glycolysis; pyruvate from D-glyceraldehyde 3-phosphate: step 2/5. The protein is Phosphoglycerate kinase (pgk) of Methanothermobacter thermautotrophicus (strain ATCC 29096 / DSM 1053 / JCM 10044 / NBRC 100330 / Delta H) (Methanobacterium thermoautotrophicum).